Here is an 805-residue protein sequence, read N- to C-terminus: Acetyl-CoA decarbonylase/synthase complex subunit alpha 3 (805 aa).

The [4Fe-4S] cluster site is built by Cys-72, Cys-75, Cys-76, Cys-78, Cys-83, and Cys-93. His-116 is a CO binding site. His-249, Cys-277, and Cys-322 together coordinate [Ni-4Fe-4S] cluster. 4Fe-4S ferredoxin-type domains are found at residues 407 to 435 (EEFKVYIDKCVKCGECMLACPEELDIPEA) and 445 to 474 (EYLEALHDVCIGCRRCEQVCKKEIPILNVL). Residues Cys-416, Cys-419, Cys-422, Cys-426, Cys-454, Cys-457, Cys-460, and Cys-464 each contribute to the [4Fe-4S] cluster site. [Ni-4Fe-4S] cluster contacts are provided by Cys-522, Cys-551, and Cys-586.

It belongs to the Ni-containing carbon monoxide dehydrogenase family. As to quaternary structure, heterotetramer of two alpha and two epsilon subunits. The ACDS complex is made up of alpha, epsilon, beta, gamma and delta subunits with a probable stoichiometry of (alpha(2)epsilon(2))(4)-beta(8)-(gamma(1)delta(1))(8). It depends on [4Fe-4S] cluster as a cofactor. [Ni-4Fe-4S] cluster is required as a cofactor.

It carries out the reaction CO + 2 oxidized [2Fe-2S]-[ferredoxin] + H2O = 2 reduced [2Fe-2S]-[ferredoxin] + CO2 + 2 H(+). Its pathway is one-carbon metabolism; methanogenesis from acetate. Its function is as follows. Part of the ACDS complex that catalyzes the reversible cleavage of acetyl-CoA, allowing growth on acetate as sole source of carbon and energy. The alpha-epsilon subcomponent functions as a carbon monoxide dehydrogenase. This chain is Acetyl-CoA decarbonylase/synthase complex subunit alpha 3, found in Methanosarcina acetivorans (strain ATCC 35395 / DSM 2834 / JCM 12185 / C2A).